The following is a 744-amino-acid chain: Translation initiation factor IF-2, chloroplastic (744 aa).

Positions 113–146 are disordered; sequence NSEGSFKSGKQKKKEKGKHKQNVNKDIHHTKNNR. The span at 121–134 shows a compositional bias: basic residues; it reads GKQKKKEKGKHKQN. Positions 244–417 constitute a tr-type G domain; the sequence is NRAPIVTILG…CSLAEFINLK (174 aa). The G1 stretch occupies residues 253–260; sequence GHVDHGKT. Residue 253-260 coordinates GTP; the sequence is GHVDHGKT. Residues 278 to 282 are G2; sequence GITQS. Positions 303 to 306 are G3; that stretch reads DTPG. GTP-binding positions include 303–307 and 357–360; these read DTPGH and NKID. The segment at 357-360 is G4; sequence NKID. Positions 393–395 are G5; sequence SAL.

It belongs to the TRAFAC class translation factor GTPase superfamily. Classic translation factor GTPase family. IF-2 subfamily.

It is found in the plastid. The protein resides in the chloroplast. One of the essential components for the initiation of protein synthesis. Protects formylmethionyl-tRNA from spontaneous hydrolysis and promotes its binding to the 30S ribosomal subunits. Also involved in the hydrolysis of GTP during the formation of the 70S ribosomal complex. The sequence is that of Translation initiation factor IF-2, chloroplastic (infB) from Gracilaria tenuistipitata var. liui (Red alga).